A 136-amino-acid chain; its full sequence is Small ribosomal subunit protein uS8c (136 aa).

Belongs to the universal ribosomal protein uS8 family. As to quaternary structure, part of the 30S ribosomal subunit.

It is found in the plastid. The protein resides in the chloroplast. Functionally, one of the primary rRNA binding proteins, it binds directly to 16S rRNA central domain where it helps coordinate assembly of the platform of the 30S subunit. This chain is Small ribosomal subunit protein uS8c (rps8), found in Oryza sativa subsp. indica (Rice).